Here is a 70-residue protein sequence, read N- to C-terminus: uncharacterized protein (70 aa).

The HTH cro/C1-type domain occupies 5 to 59; the sequence is IREFRAKYGMTQEELAKKVGVRRETIVFLEKGKYNPSLRLAYKIARVFNARIEDL. Residues 16-35 constitute a DNA-binding region (H-T-H motif); it reads QEELAKKVGVRRETIVFLEK.

This is an uncharacterized protein from Archaeoglobus fulgidus (strain ATCC 49558 / DSM 4304 / JCM 9628 / NBRC 100126 / VC-16).